Here is a 144-residue protein sequence, read N- to C-terminus: Large ribosomal subunit protein uL15 (144 aa).

The disordered stretch occupies residues 1 to 52; that stretch reads MRLNTLSPAEGAKHSAKRLGRGIGSGLGKTGGRGHKGQKSRTGSGVRRGFEG. Gly residues predominate over residues 21-31; it reads RGIGSGLGKTG.

This sequence belongs to the universal ribosomal protein uL15 family. In terms of assembly, part of the 50S ribosomal subunit.

Functionally, binds to the 23S rRNA. The chain is Large ribosomal subunit protein uL15 from Haemophilus influenzae (strain 86-028NP).